The following is a 579-amino-acid chain: 6-deoxy-6-sulfo-D-gluconate dehydratase (579 aa).

Cysteine 59, cysteine 127, and cysteine 200 together coordinate [4Fe-4S] cluster.

It belongs to the IlvD/Edd family. In terms of assembly, homodimer. Requires [4Fe-4S] cluster as cofactor.

The enzyme catalyses 6-deoxy-6-sulfo-D-gluconate = 2-dehydro-3,6-dideoxy-6-sulfo-D-gluconate + H2O. Functionally, catalyzes the dehydration of 6-deoxy-6-sulfo-D-gluconate to 2-dehydro-3,6-dideoxy-6-sulfo-D-gluconate. Is involved in a degradation pathway of sulfoquinovose (SQ) that allows P.putida SQ1 to use SQ as the sole carbon and energy source for growth. This chain is 6-deoxy-6-sulfo-D-gluconate dehydratase, found in Pseudomonas putida (Arthrobacter siderocapsulatus).